An 84-amino-acid polypeptide reads, in one-letter code: Cell division topological specificity factor (84 aa).

Belongs to the MinE family.

In terms of biological role, prevents the cell division inhibition by proteins MinC and MinD at internal division sites while permitting inhibition at polar sites. This ensures cell division at the proper site by restricting the formation of a division septum at the midpoint of the long axis of the cell. The protein is Cell division topological specificity factor of Rhodopseudomonas palustris (strain BisA53).